Here is a 392-residue protein sequence, read N- to C-terminus: Nucleosome assembly protein 1-like 1-A (392 aa).

The segment at 1 to 37 (MANIDNKGQTELDQQDMEDVEDVEEEETGEDANSKAR) is disordered. The segment covering 13 to 30 (DQQDMEDVEDVEEEETGE) has biased composition (acidic residues). An NAP1L motif motif is present at residues 126–150 (YEPTEEECEWKVEEEDISGDLKEKA). The short motif at 273–279 (IKKKQKH) is the Nuclear localization signal element. Residues 346–377 (AIEDDDDDYDEEGEEADDEEGEEEADEDNDPD) are compositionally biased toward acidic residues. The segment at 346–392 (AIEDDDDDYDEEGEEADDEEGEEEADEDNDPDYEPKKGQNPAECKQQ) is disordered.

Belongs to the nucleosome assembly protein (NAP) family. As to quaternary structure, forms homomultimers. Interacts with histone B4. Interacts with the B-type cyclins ccnb1 and ccnb2. Post-translationally, phosphorylated by cyclin B-cdc2 kinase complexes. In terms of tissue distribution, initially expressed throughout the embryo with expression higher at the animal pole. Becomes localized to presumptive ectoderm by gastrula stages. By stage 18 (neurula), expressed in the neural plate and posterior to the cement gland. In late neurula/early tailbud stages, expressed in the neural crest, neural tube, eyes, tailbud and ventral blood islands. Adult expression is predominantly in ovaries.

The protein resides in the cytoplasm. It is found in the nucleus. Its function is as follows. Acts as a chaperone for the linker histone to facilitate deposition of histone B4 onto linker DNA. Required for both remodeling of sperm chromatin into nucleosomes, and linker histone binding to nucleosome core dimers. Plays a role in tissue-specific gene regulation. Required for primitive hemopoiesis, acting upstream of tal1/scl. This Xenopus laevis (African clawed frog) protein is Nucleosome assembly protein 1-like 1-A (nap1l1-a).